The chain runs to 235 residues: Phosphoribosylaminoimidazole-succinocarboxamide synthase (235 aa).

It belongs to the SAICAR synthetase family.

It catalyses the reaction 5-amino-1-(5-phospho-D-ribosyl)imidazole-4-carboxylate + L-aspartate + ATP = (2S)-2-[5-amino-1-(5-phospho-beta-D-ribosyl)imidazole-4-carboxamido]succinate + ADP + phosphate + 2 H(+). The protein operates within purine metabolism; IMP biosynthesis via de novo pathway; 5-amino-1-(5-phospho-D-ribosyl)imidazole-4-carboxamide from 5-amino-1-(5-phospho-D-ribosyl)imidazole-4-carboxylate: step 1/2. This Streptococcus mutans serotype c (strain ATCC 700610 / UA159) protein is Phosphoribosylaminoimidazole-succinocarboxamide synthase.